A 200-amino-acid polypeptide reads, in one-letter code: MAKGDPKKPKGKMSAYAFFVQTCREEHKKKNPEVPVNFAEFSKKCSERWKTMSGKEKSKFDEMAKADKVRYDREMKDYGPAKGGKKKKDPNAPKRPPSGFFLFCSEFRPKIKSANPGISIGDVAKKLGEMWNNLSDSEKQPYINKAAKLKEKYEKDVADYKSKGKFDGAKGAAKVARKKVEEEDEEDEEEEEEEEEEEDE.

Residue K3 is modified to N6-acetyllysine. 2 DNA-binding regions (HMG box) span residues 9–79 (PKGK…KDYG) and 93–161 (PKRP…ADYK). Cysteine sulfonic acid (-SO3H); alternate is present on C23. A disulfide bridge connects residues C23 and C45. K30 and K43 each carry N6-acetyllysine. Position 45 is a cysteine sulfonic acid (-SO3H); alternate (C45). Residues 71–97 (YDREMKDYGPAKGGKKKKDPNAPKRPP) are disordered. S98 carries the post-translational modification Phosphoserine. C104 bears the Cysteine sulfonic acid (-SO3H) mark. An N6-acetyllysine mark is found at K112 and K139. The segment at 163–200 (KGKFDGAKGAAKVARKKVEEEDEEDEEEEEEEEEEEDE) is disordered. The span at 182-200 (EEDEEDEEEEEEEEEEEDE) shows a compositional bias: acidic residues.

It belongs to the HMGB family. In terms of processing, reduction/oxidation of cysteine residues Cys-23, Cys-45 and Cys-104 and a possible intramolecular disulfide bond involving Cys-23 and Cys-45 give rise to different redox forms with specific functional activities in various cellular compartments: 1- fully reduced HMGB3 (HMGB3C23hC45hC104h), 2- disulfide HMGB3 (HMGB3C23-C45C104h) and 3- sulfonyl HMGB3 (HMGB3C23soC45soC104so).

It is found in the nucleus. Its subcellular location is the chromosome. It localises to the cytoplasm. Multifunctional protein with various roles in different cellular compartments. May act in a redox sensitive manner. Associates with chromatin and binds DNA with a preference for non-canonical DNA structures such as single-stranded DNA. Can bend DNA and enhance DNA flexibility by looping thus providing a mechanism to promote activities on various gene promoters. Proposed to be involved in the innate immune response to nucleic acids by acting as a cytoplasmic promiscuous immunogenic DNA/RNA sensor. Negatively regulates B-cell and myeloid cell differentiation. In hematopoietic stem cells may regulate the balance between self-renewal and differentiation. Involved in negative regulation of canonical Wnt signaling. This is High mobility group protein B3 (HMGB3) from Bos taurus (Bovine).